We begin with the raw amino-acid sequence, 352 residues long: UDP-N-acetylglucosamine--N-acetylmuramyl-(pentapeptide) pyrophosphoryl-undecaprenol N-acetylglucosamine transferase 3 (352 aa).

Residues 11-13 (SAG), R164, S194, and Q289 contribute to the UDP-N-acetyl-alpha-D-glucosamine site.

This sequence belongs to the glycosyltransferase 28 family. MurG subfamily.

It is found in the cell membrane. The enzyme catalyses di-trans,octa-cis-undecaprenyl diphospho-N-acetyl-alpha-D-muramoyl-L-alanyl-D-glutamyl-meso-2,6-diaminopimeloyl-D-alanyl-D-alanine + UDP-N-acetyl-alpha-D-glucosamine = di-trans,octa-cis-undecaprenyl diphospho-[N-acetyl-alpha-D-glucosaminyl-(1-&gt;4)]-N-acetyl-alpha-D-muramoyl-L-alanyl-D-glutamyl-meso-2,6-diaminopimeloyl-D-alanyl-D-alanine + UDP + H(+). Its pathway is cell wall biogenesis; peptidoglycan biosynthesis. In terms of biological role, cell wall formation. Catalyzes the transfer of a GlcNAc subunit on undecaprenyl-pyrophosphoryl-MurNAc-pentapeptide (lipid intermediate I) to form undecaprenyl-pyrophosphoryl-MurNAc-(pentapeptide)GlcNAc (lipid intermediate II). This is UDP-N-acetylglucosamine--N-acetylmuramyl-(pentapeptide) pyrophosphoryl-undecaprenol N-acetylglucosamine transferase 3 from Bacillus thuringiensis (strain Al Hakam).